Here is a 132-residue protein sequence, read N- to C-terminus: Ribosome-binding factor A (132 aa).

Belongs to the RbfA family. As to quaternary structure, monomer. Binds 30S ribosomal subunits, but not 50S ribosomal subunits or 70S ribosomes.

It is found in the cytoplasm. One of several proteins that assist in the late maturation steps of the functional core of the 30S ribosomal subunit. Associates with free 30S ribosomal subunits (but not with 30S subunits that are part of 70S ribosomes or polysomes). Required for efficient processing of 16S rRNA. May interact with the 5'-terminal helix region of 16S rRNA. This chain is Ribosome-binding factor A, found in Teredinibacter turnerae (strain ATCC 39867 / T7901).